Reading from the N-terminus, the 269-residue chain is MTALPRYAVFGNPVAHSKSPQIHQQFTLQEGVDIEYGRICADIDGFAQAVSTFFETGGCGANVTVPFKQEAFALADEHSDRALAAGAVNTLILLKNGKLRGDNTDGIGLVNDITQVKNIAIEGKTILLLGAGGAVRGVIPVLKEHRPARIVIANRTHAKAEELARLFGIEAVPMADLNGGFDIIINGTSGGLSGQLPAVNPEIFRSCRLAYDMVYGDAAQTFLNFAQSNGAAEVSDGLGMLVGQAAASYHIWRGFTPDIRPVIEYMKAL.

Residues 17–19 and threonine 64 contribute to the shikimate site; that span reads SKS. Lysine 68 (proton acceptor) is an active-site residue. Aspartate 80 contacts NADP(+). Shikimate contacts are provided by asparagine 89 and aspartate 105. Residues 130–134, 154–159, and methionine 213 each bind NADP(+); these read GAGGA and NRTHAK. Tyrosine 215 serves as a coordination point for shikimate. Glycine 237 is a binding site for NADP(+).

It belongs to the shikimate dehydrogenase family. In terms of assembly, homodimer.

The catalysed reaction is shikimate + NADP(+) = 3-dehydroshikimate + NADPH + H(+). It functions in the pathway metabolic intermediate biosynthesis; chorismate biosynthesis; chorismate from D-erythrose 4-phosphate and phosphoenolpyruvate: step 4/7. In terms of biological role, involved in the biosynthesis of the chorismate, which leads to the biosynthesis of aromatic amino acids. Catalyzes the reversible NADPH linked reduction of 3-dehydroshikimate (DHSA) to yield shikimate (SA). The sequence is that of Shikimate dehydrogenase (NADP(+)) from Neisseria polysaccharea.